The primary structure comprises 257 residues: uncharacterized protein (257 aa).

A signal peptide spans 1–26 (MKKAFILSAAAAVGLFTFGGVQQASA). The segment at 80-135 (AKQSNVKVQDVQKTETAKPAQKTTEKAAADQNTASKAPATAEKTNTTTSAPSSVSA) is disordered. The segment covering 121–134 (EKTNTTTSAPSSVS) has biased composition (polar residues). The 114-residue stretch at 141 to 254 (VELTNAERQK…ESGSIWTQQF (114 aa)) folds into the SCP domain.

This is an uncharacterized protein from Bacillus subtilis (strain 168).